A 386-amino-acid chain; its full sequence is 11-beta-hydroxysteroid dehydrogenase type 2 (386 aa).

82–111 (TRAVLITGCDTGFGKETAKKLDAMGFTVLA) contacts NAD(+). Ser-219 is a substrate binding site. Tyr-232 serves as the catalytic Proton acceptor.

This sequence belongs to the short-chain dehydrogenases/reductases (SDR) family. Interacts with ligand-free cytoplasmic NR3C2. Highly expressed in kidney. Also found in colon and small intestine. Not expressed in the adrenal gland. Expressed in uterus.

The protein localises to the microsome. It localises to the endoplasmic reticulum. It carries out the reaction an 11beta-hydroxysteroid + NAD(+) = an 11-oxosteroid + NADH + H(+). The catalysed reaction is corticosterone + NAD(+) = 11-dehydrocorticosterone + NADH + H(+). The enzyme catalyses 11beta,17beta-dihydroxyandrost-4-ene-3-one + NAD(+) = 17beta-hydroxyandrost-4-ene-3,11-dione + NADH + H(+). It catalyses the reaction 11beta-hydroxyandrost-4-ene-3,17-dione + NAD(+) = androst-4-ene-3,11,17-trione + NADH + H(+). Its pathway is steroid metabolism. Inhibited by glycyrrhetinic acid. Induced by progesterone, through the Ihh signaling pathway. In terms of biological role, catalyzes the conversion of biologically active 11beta-hydroxyglucocorticoids (11beta-hydroxysteroid) such as corticosterone, to inactive 11-ketoglucocorticoids (11-oxosteroid) such as 11-dehydrocorticosterone, in the presence of NAD(+). Functions as a dehydrogenase (oxidase), thereby decreasing the concentration of active glucocorticoids, thus protecting the nonselective mineralocorticoid receptor from occupation by glucocorticoids. Plays an important role in maintaining glucocorticoids balance during preimplantation and protects the fetus from excessive maternal corticosterone exposure. Catalyzes the oxidation of 11beta-hydroxytestosterone (11beta,17beta-dihydroxyandrost-4-ene-3-one) to 11-ketotestosterone (17beta-hydroxyandrost-4-ene-3,11-dione), a major bioactive androgen. Catalyzes the conversion of 11beta-hydroxyandrostenedione (11beta-hydroxyandrost-4-ene-3,17-dione) to 11-ketoandrostenedione (androst-4-ene-3,11,17-trione), which can be further metabolized to 11-ketotestosterone. Converts 7-beta-25-dihydroxycholesterol to 7-oxo-25-hydroxycholesterol in vitro. 7-beta-25-dihydroxycholesterol (not 7-oxo-25-hydroxycholesterol) acts as a ligand for the G-protein-coupled receptor (GPCR) Epstein-Barr virus-induced gene 2 (EBI2) and may thereby regulate immune cell migration. This Mus musculus (Mouse) protein is 11-beta-hydroxysteroid dehydrogenase type 2 (Hsd11b2).